Reading from the N-terminus, the 503-residue chain is Maturase K (503 aa).

The protein belongs to the intron maturase 2 family. MatK subfamily.

The protein localises to the plastid. It localises to the chloroplast. Functionally, usually encoded in the trnK tRNA gene intron. Probably assists in splicing its own and other chloroplast group II introns. This is Maturase K from Silene latifolia (White campion).